Consider the following 225-residue polypeptide: tRNA 2'-phosphotransferase 1 (225 aa).

The segment at 1 to 21 is disordered; the sequence is MDCETRGRGRRGRGNRNEESR.

The protein belongs to the KptA/TPT1 family.

The enzyme catalyses 2'-phospho-[ligated tRNA] + NAD(+) = mature tRNA + ADP-alpha-D-ribose 1'',2''-cyclic phosphate + nicotinamide. Functionally, catalyzes the last step of tRNA splicing, the transfer of the splice junction 2'-phosphate from ligated tRNA to NAD to produce ADP-ribose 1''-2'' cyclic phosphate. This is tRNA 2'-phosphotransferase 1 (trpt1) from Danio rerio (Zebrafish).